Consider the following 377-residue polypeptide: tRNA-splicing endonuclease subunit SEN2 (377 aa).

A coiled-coil region spans residues 119-174 (ETEMTLEKVTQQRRLQRLEFKKERAKLERELLELRKKGGHIDEENILLEKQRESLR). Catalysis depends on residues Tyr289, His297, and Lys328.

The protein belongs to the tRNA-intron endonuclease family. Heterotetramer composed of SEN2, SEN15, SEN34 and SEN54. Interacts directly with SEN54.

It is found in the nucleus. The protein resides in the endomembrane system. Its subcellular location is the mitochondrion outer membrane. It catalyses the reaction pretRNA = a 3'-half-tRNA molecule with a 5'-OH end + a 5'-half-tRNA molecule with a 2',3'-cyclic phosphate end + an intron with a 2',3'-cyclic phosphate and a 5'-hydroxyl terminus.. In terms of biological role, constitutes one of the two catalytic subunit of the tRNA-splicing endonuclease complex, a complex responsible for identification and cleavage of the splice sites in pre-tRNA. It cleaves pre-tRNA at the 5'- and 3'-splice sites to release the intron. The products are an intron and two tRNA half-molecules bearing 2',3'-cyclic phosphate and 5'-OH termini. There are no conserved sequences at the splice sites, but the intron is invariably located at the same site in the gene, placing the splice sites an invariant distance from the constant structural features of the tRNA body. This subunit may anchor the endonuclease complex to the nuclear membrane. Probably carries the active site for 5'-splice site cleavage. The protein is tRNA-splicing endonuclease subunit SEN2 (SEN2) of Saccharomyces cerevisiae (strain ATCC 204508 / S288c) (Baker's yeast).